Here is a 300-residue protein sequence, read N- to C-terminus: MAEEVSSLMKATVLMRQPGRVQEIVGALRRGGGDRLQVISDFDMTLSRFAYNGQRCPSSHNILDNSKIISEDCRKELTELFHHYYPIEIDPHRTIKEKLPHMVQWWSKAHSLLCQQRIQKVQIAQVVGESTAMLREGYKTFFDTLYQNNIPLFIFSAGIGDILEEIIRQMKVFHPNIHIVSNYMDFSEDGFLKGFKGQLIHTYNKNSSVCENSSYFQQLQNKTNIILLGDSIGDLTMADGVPGVQNILKIGFLNDKVEERRERYMDSYDIVLEKDETLDVVNGLLRHILYQGDCVELQGS.

The active-site Nucleophile is the aspartate 41. The Mg(2+) site is built by aspartate 41 and aspartate 43. Aspartate 43 serves as the catalytic Proton donor. Glutamate 88 lines the CMP pocket. N(7)-methyl-GMP is bound at residue glutamate 88. Substrate-binding positions include 156–157 and lysine 205; that span reads SA. Mg(2+) is bound at residue aspartate 230. Lysine 256 carries the N6-acetyllysine modification.

It belongs to the pyrimidine 5'-nucleotidase family. In terms of assembly, monomer.

It is found in the cytoplasm. The catalysed reaction is N(7)-methyl-GMP + H2O = N(7)-methylguanosine + phosphate. It carries out the reaction CMP + H2O = cytidine + phosphate. The enzyme catalyses a ribonucleoside 5'-phosphate + H2O = a ribonucleoside + phosphate. Functionally, specifically hydrolyzes 7-methylguanosine monophosphate (m(7)GMP) to 7-methylguanosine and inorganic phosphate. The specific activity for m(7)GMP may protect cells against undesired salvage of m(7)GMP and its incorporation into nucleic acids. Also has weak activity for CMP. UMP and purine nucleotides are poor substrates. The protein is 7-methylguanosine phosphate-specific 5'-nucleotidase (Nt5c3b) of Mus musculus (Mouse).